The following is a 152-amino-acid chain: MTEYKKVIAHNKKALFQYFIEERLEAGIVLKGSEVRSLRQGKASIEESHAADTGHEVFLYNCHIAEYEKANRFNHATRRPRKLLLHTKEIKKIIGRIRIKGYTLVALSMYFNKKNKVKVELGIAKGKKLHDKRESIKEKDWKRDQSRLIRQK.

It belongs to the SmpB family.

Its subcellular location is the cytoplasm. Required for rescue of stalled ribosomes mediated by trans-translation. Binds to transfer-messenger RNA (tmRNA), required for stable association of tmRNA with ribosomes. tmRNA and SmpB together mimic tRNA shape, replacing the anticodon stem-loop with SmpB. tmRNA is encoded by the ssrA gene; the 2 termini fold to resemble tRNA(Ala) and it encodes a 'tag peptide', a short internal open reading frame. During trans-translation Ala-aminoacylated tmRNA acts like a tRNA, entering the A-site of stalled ribosomes, displacing the stalled mRNA. The ribosome then switches to translate the ORF on the tmRNA; the nascent peptide is terminated with the 'tag peptide' encoded by the tmRNA and targeted for degradation. The ribosome is freed to recommence translation, which seems to be the essential function of trans-translation. In Rickettsia peacockii (strain Rustic), this protein is SsrA-binding protein.